A 4328-amino-acid chain; its full sequence is Cadherin-4 (4328 aa).

Residues 1 to 23 (MKKHRVFHLFLLIFCKAISLVTT) form the signal peptide. The Extracellular segment spans residues 24-4072 (SSSTEQIFEF…TVLEFLLKAE (4049 aa)). Asparagine 39 and asparagine 56 each carry an N-linked (GlcNAc...) asparagine glycan. Cadherin domains are found at residues 108 to 153 (PLNR…SPVF) and 156 to 275 (GEQG…NPNI). 7 N-linked (GlcNAc...) asparagine glycosylation sites follow: asparagine 196, asparagine 330, asparagine 339, asparagine 365, asparagine 431, asparagine 452, and asparagine 584. 11 Cadherin domains span residues 384-492 (DNEK…APVF), 507-608 (PGDV…SPVF), 609-720 (SSFP…SPQF), 721-826 (DEVS…PPKC), 827-934 (VVQH…AIEF), 935-1051 (DDVA…KPMY), 1047-1156 (KKPM…SPTF), 1175-1262 (RIFA…PPEI), 1265-1363 (KKSD…RPKF), 1364-1467 (SASH…SPYF), and 1476-1570 (VDES…APET). N-linked (GlcNAc...) asparagine glycosylation is found at asparagine 811 and asparagine 899. The Cell attachment site motif lies at 1090 to 1092 (RGD). N-linked (GlcNAc...) asparagine glycosylation is present at asparagine 1192. The disordered stretch occupies residues 1246-1267 (NSAGQKPRKSKNSPPEISGKKS). The N-linked (GlcNAc...) asparagine glycan is linked to asparagine 1335. An N-linked (GlcNAc...) asparagine glycan is attached at asparagine 1610. In terms of domain architecture, Cadherin 14 spans 1671-1784 (RRQVYRGTIR…IDENDEPPRF (114 aa)). Asparagine 1895 carries an N-linked (GlcNAc...) asparagine glycan. The Cadherin 15 domain maps to 1917–1984 (FSIVNPHEAF…ENINDETPIF (68 aa)). 7 N-linked (GlcNAc...) asparagine glycosylation sites follow: asparagine 2059, asparagine 2150, asparagine 2216, asparagine 2367, asparagine 2413, asparagine 2440, and asparagine 2535. 2 Cadherin domains span residues 2187–2285 (EKLK…MPEF) and 2286–2397 (IRSD…PPRF). Cadherin domains follow at residues 2429-2505 (LQFS…PPFF), 2506-2608 (VLPF…VPRF), 2609-2712 (SNSH…APAF), 2719-2813 (FTIS…PPQF), 2828-2915 (SPIL…CPEA), 2913-3011 (PEAN…RPKI), 3012-3113 (IEKL…APTF), 3114-3216 (EKST…APKF), and 3217-3326 (EKEK…APTF). Residues asparagine 2844, asparagine 2916, asparagine 2941, asparagine 3083, and asparagine 3143 are each glycosylated (N-linked (GlcNAc...) asparagine). N-linked (GlcNAc...) asparagine glycosylation occurs at asparagine 3330. Cadherin domains are found at residues 3335 to 3428 (VQEG…APTM) and 3429 to 3554 (KPMK…VDEF). The N-linked (GlcNAc...) asparagine glycan is linked to asparagine 3512. In terms of domain architecture, EGF-like 1 spans 3706 to 3744 (ETNQCAKSPCEQWQLCIPSVHNSTYECVCPLGMEGDKCS). 10 cysteine pairs are disulfide-bonded: cysteine 3710/cysteine 3721, cysteine 3715/cysteine 3732, cysteine 3734/cysteine 3743, cysteine 3898/cysteine 3925, cysteine 3933/cysteine 3944, cysteine 3938/cysteine 3954, cysteine 3956/cysteine 3965, cysteine 3972/cysteine 3983, cysteine 3977/cysteine 3992, and cysteine 3994/cysteine 4003. Asparagine 3727 carries an N-linked (GlcNAc...) asparagine glycan. The 169-residue stretch at 3757–3925 (EAELSVGGDG…MKLFGAQPGC (169 aa)) folds into the Laminin G-like domain. 2 consecutive EGF-like domains span residues 3929-3966 (TSSP…NVCE) and 3968-4004 (DLEP…KHCE). Asparagine 4043 carries an N-linked (GlcNAc...) asparagine glycan. The chain crosses the membrane as a helical span at residues 4073–4093 (IVIVILGVLLLLLVFCLTFIT). Residues 4094-4328 (WKCCKKNRDP…IDEEVNIHIS (235 aa)) are Cytoplasmic-facing. 2 disordered regions span residues 4143-4215 (TSSV…SSLR) and 4268-4311 (NFER…PISL). Residues 4178-4196 (TRRDPLPSDKFRRVDETAN) show a composition bias toward basic and acidic residues. A Cell attachment site motif is present at residues 4207–4209 (RGD).

In terms of tissue distribution, in larvae and adult, it is expressed in various tissues including pharyngeal muscle, hypodermis and gonad. In the nervous system it is expressed in sensory neurons and motor neurons in the ventral cord.

Its subcellular location is the cell membrane. Functionally, potential calcium-dependent cell-adhesion protein that controls axon guidance in the ventral cord. The polypeptide is Cadherin-4 (Caenorhabditis elegans).